The sequence spans 393 residues: MSIKTVKDFNSFAGKRVLVRCDFNVPLKEGSISDDTRIKAALPTIEYLKERGARIVLVSHLGRPEGKKNLKYSLKPVANRLSGLLNQDVKMFSDCIGSEIVNNTLQMKDGDVVLLENVRFYAEEEKNDKNFAKKLSENGDVFVSDAFGAAHRAHASTVGVSDYLPSVGGFLMEKEDKFLGEVLKNPEKPFVSIIGGSKVSSKIAVLESLLSKSNVVVIGGGMAYTFLYSKGYSIGKSLLESEYIDTASSFLRKAKELGVKVILPLDHIVADDFNKNSTPEYIDSLNIPENKIGMDIGVNTLKEIEKVVKTAKTIIWNGPLGVFEFDSFSKGTAKVAEMVASCSGLTVVGGGDSVAAVNKFNLSDKITHVSTGGGASLEYLEGKILPGIKVLEK.

Substrate contacts are provided by residues 22–24 (DFN), R37, 60–63 (HLGR), R119, and R152. ATP-binding positions include K202, G293, E324, and 350–353 (GGDS).

Belongs to the phosphoglycerate kinase family. In terms of assembly, monomer.

The protein resides in the cytoplasm. It carries out the reaction (2R)-3-phosphoglycerate + ATP = (2R)-3-phospho-glyceroyl phosphate + ADP. It functions in the pathway carbohydrate degradation; glycolysis; pyruvate from D-glyceraldehyde 3-phosphate: step 2/5. This chain is Phosphoglycerate kinase, found in Borreliella afzelii (strain PKo) (Borrelia afzelii).